The following is a 405-amino-acid chain: MISDTVIAILAVALVGSTVQAAPVDATATSTSGIIAVPISKSAAQLAREADPVVSLDWLKKTKAQAQYKHKQANARLHSKRATGASVLTDQGSESLWTGPITIGGQSFTVDWDTGSSDLWVPSSACSSAACNAHHKYTLTSTGKKQSGTFSISYGDGSSASGPVYKDNVVASGLQATSQVFGAVTSESSSFSSDPSDGISGLGWPALAQLSGTSYFWSLINQGTVTSPVFSFRLATTNSELYLGGINSAHYTGAITYTPVTQKAYWTIALGGVSVNGAAINPSVSSAIIDTGTTLVYGPTAGVAALYAKIPGSASMADTYGSDYQGYYTFPCSAVPTVALTFGGSSFSVPTSAFNLGTVSSGSKQCVGGIVGQGDGSWLVGDVFLQGVYSIYDVGNARVGFAKTV.

Residues 1–21 form the signal peptide; that stretch reads MISDTVIAILAVALVGSTVQA. The propeptide at 22–81 is removed in mature form; that stretch reads APVDATATSTSGIIAVPISKSAAQLAREADPVVSLDWLKKTKAQAQYKHKQANARLHSKR. Residues 97–402 form the Peptidase A1 domain; the sequence is WTGPITIGGQ…DVGNARVGFA (306 aa). The active site involves aspartate 113. A disulfide bond links cysteine 126 and cysteine 131. Aspartate 290 is an active-site residue. A disulfide bridge connects residues cysteine 332 and cysteine 366.

This sequence belongs to the peptidase A1 family.

The protein resides in the secreted. Inhibited by pepstatin A. Its function is as follows. Possesses acidic protease activity. Hydrolyzes casein and azoalbumin in vitro. This is Aspartic protease from Phaffia rhodozyma (Yeast).